The primary structure comprises 570 residues: Formate--tetrahydrofolate ligase (570 aa).

65–72 provides a ligand contact to ATP; it reads TPFGEGKT.

It belongs to the formate--tetrahydrofolate ligase family.

The enzyme catalyses (6S)-5,6,7,8-tetrahydrofolate + formate + ATP = (6R)-10-formyltetrahydrofolate + ADP + phosphate. The protein operates within one-carbon metabolism; tetrahydrofolate interconversion. In Shewanella woodyi (strain ATCC 51908 / MS32), this protein is Formate--tetrahydrofolate ligase.